The following is a 310-amino-acid chain: Regulator of microtubule dynamics protein 1 (310 aa).

Position 165 is an N6-succinyllysine (lysine 165). TPR repeat units follow at residues 168–204 and 222–258; these read AICI…NPKD and PWYQ…DPNF.

The protein belongs to the RMDN family. In terms of assembly, interacts with microtubules.

It is found in the cytoplasm. It localises to the cytoskeleton. The protein localises to the spindle. The protein resides in the spindle pole. The sequence is that of Regulator of microtubule dynamics protein 1 (Rmdn1) from Rattus norvegicus (Rat).